A 1082-amino-acid chain; its full sequence is Inner tegument protein (1082 aa).

Residues 604–1082 are interaction with large tegument protein; the sequence is DHIDCLFNIS…QQDLIAPLTF (479 aa).

Belongs to the herpesviridae inner tegument protein family. In terms of assembly, interacts (via C-terminus) with the large tegument protein/LTP (via N-terminus).

The protein localises to the virion tegument. It localises to the host cytoplasm. It is found in the host nucleus. Its subcellular location is the host Golgi apparatus. The protein resides in the host trans-Golgi network. In terms of biological role, plays an essential role in cytoplasmic secondary envelopment during viral egress. Interacts with the capsid via the large tegument protein/LTP and participates in its transport to the host trans-Golgi network (TGN) where secondary envelopment occurs. Modulates tegumentation and capsid accumulation at the viral assembly complex. The protein is Inner tegument protein (U30) of Homo sapiens (Human).